The sequence spans 284 residues: Tropomyosin (284 aa).

Residues 1-284 (MDGIKKKMIA…DQTFAELTGY (284 aa)) are a coiled coil. Basic and acidic residues-rich tracts occupy residues 29-42 (LKQKEEEQEKKETE) and 111-136 (AKFDEASKTAEESERGRKELEIRSIA). 2 disordered regions span residues 29 to 49 (LKQKEEEQEKKETEIGELNNR) and 111 to 149 (AKFDEASKTAEESERGRKELEIRSIADDEGLSQLEDQQK).

It belongs to the tropomyosin family.

Functionally, tropomyosin, in association with the troponin complex, plays a central role in the calcium dependent regulation of muscle contraction. This is Tropomyosin from Clonorchis sinensis (Chinese liver fluke).